The primary structure comprises 204 residues: High frequency lysogenization protein HflD homolog (204 aa).

The protein belongs to the HflD family.

Its subcellular location is the cytoplasm. It localises to the cell inner membrane. This Xanthomonas campestris pv. campestris (strain ATCC 33913 / DSM 3586 / NCPPB 528 / LMG 568 / P 25) protein is High frequency lysogenization protein HflD homolog.